We begin with the raw amino-acid sequence, 571 residues long: Glutamate--tRNA ligase (571 aa).

The 'HIGH' region motif lies at 110–120 (PNPNGPATLGS).

Belongs to the class-I aminoacyl-tRNA synthetase family. Glutamate--tRNA ligase type 2 subfamily.

The protein localises to the cytoplasm. It catalyses the reaction tRNA(Glu) + L-glutamate + ATP = L-glutamyl-tRNA(Glu) + AMP + diphosphate. In terms of biological role, catalyzes the attachment of glutamate to tRNA(Glu) in a two-step reaction: glutamate is first activated by ATP to form Glu-AMP and then transferred to the acceptor end of tRNA(Glu). This chain is Glutamate--tRNA ligase, found in Methanosarcina mazei (strain ATCC BAA-159 / DSM 3647 / Goe1 / Go1 / JCM 11833 / OCM 88) (Methanosarcina frisia).